Here is a 270-residue protein sequence, read N- to C-terminus: Acetylglutamate kinase (270 aa).

Residues 53 to 54 (GG), R75, and N167 each bind substrate.

It belongs to the acetylglutamate kinase family. ArgB subfamily.

It is found in the cytoplasm. It catalyses the reaction N-acetyl-L-glutamate + ATP = N-acetyl-L-glutamyl 5-phosphate + ADP. Its pathway is amino-acid biosynthesis; L-arginine biosynthesis; N(2)-acetyl-L-ornithine from L-glutamate: step 2/4. Catalyzes the ATP-dependent phosphorylation of N-acetyl-L-glutamate. This Shewanella halifaxensis (strain HAW-EB4) protein is Acetylglutamate kinase.